The sequence spans 217 residues: tRNA (guanine-N(7)-)-methyltransferase (217 aa).

Glu-43, Asp-68, Asn-101, and Asn-123 together coordinate S-adenosyl-L-methionine. Position 127 (Lys-127) interacts with substrate. Residues 129-134 (KHNKRR) form an interaction with RNA region. Substrate-binding positions include Asp-159 and 196–199 (TEYE).

This sequence belongs to the class I-like SAM-binding methyltransferase superfamily. TrmB family.

It carries out the reaction guanosine(46) in tRNA + S-adenosyl-L-methionine = N(7)-methylguanosine(46) in tRNA + S-adenosyl-L-homocysteine. The protein operates within tRNA modification; N(7)-methylguanine-tRNA biosynthesis. Its function is as follows. Catalyzes the formation of N(7)-methylguanine at position 46 (m7G46) in tRNA. This is tRNA (guanine-N(7)-)-methyltransferase from Clostridium botulinum (strain Okra / Type B1).